The primary structure comprises 344 residues: Fructose-1,6-bisphosphatase class 1 (344 aa).

4 residues coordinate Mg(2+): glutamate 107, aspartate 129, leucine 131, and aspartate 132. The substrate site is built by asparagine 224, tyrosine 252, and lysine 282. Glutamate 288 is a Mg(2+) binding site.

Belongs to the FBPase class 1 family. Homotetramer. The cofactor is Mg(2+).

It is found in the cytoplasm. The catalysed reaction is beta-D-fructose 1,6-bisphosphate + H2O = beta-D-fructose 6-phosphate + phosphate. The protein operates within carbohydrate biosynthesis; Calvin cycle. This is Fructose-1,6-bisphosphatase class 1 from Synechococcus sp. (strain ATCC 27144 / PCC 6301 / SAUG 1402/1) (Anacystis nidulans).